The following is a 255-amino-acid chain: tRNA (guanine-N(1)-)-methyltransferase (255 aa).

S-adenosyl-L-methionine contacts are provided by residues G119 and 139–144 (IGDFIL).

It belongs to the RNA methyltransferase TrmD family. Homodimer.

It localises to the cytoplasm. It catalyses the reaction guanosine(37) in tRNA + S-adenosyl-L-methionine = N(1)-methylguanosine(37) in tRNA + S-adenosyl-L-homocysteine + H(+). Specifically methylates guanosine-37 in various tRNAs. The chain is tRNA (guanine-N(1)-)-methyltransferase from Pseudoalteromonas translucida (strain TAC 125).